A 467-amino-acid polypeptide reads, in one-letter code: Serine decarboxylase 2 (467 aa).

H178 provides a ligand contact to substrate. Position 290 is an N6-(pyridoxal phosphate)lysine (K290).

It belongs to the group II decarboxylase family. Requires pyridoxal 5'-phosphate as cofactor.

It carries out the reaction L-serine + H(+) = ethanolamine + CO2. Its function is as follows. Catalyzes the biosynthesis of ethanolamine from serine. Decarboxylation of free serine is the major source of ethanolamine production in plants and ethanolamine metabolism is crucial for the synthesis of choline, phosphatidylethanolamine (PE) and phosphatidylcholine (PC), and thus for plant growth. In Oryza sativa subsp. japonica (Rice), this protein is Serine decarboxylase 2.